We begin with the raw amino-acid sequence, 436 residues long: Xaa-Arg dipeptidase (436 aa).

Belongs to the peptidase M20A family.

It catalyses the reaction beta-alanyl-L-lysine + H2O = beta-alanine + L-lysine. The enzyme catalyses beta-alanyl-L-ornithine + H2O = beta-alanine + L-ornithine. It carries out the reaction N(2)-(4-aminobutanoyl)-L-lysine + H2O = 4-aminobutanoate + L-lysine. The catalysed reaction is N(2)-(4-aminobutanoyl)-L-ornithine + H2O = 4-aminobutanoate + L-ornithine. It catalyses the reaction N(2)-(4-aminobutanoyl)-L-arginine + H2O = 4-aminobutanoate + L-arginine. In terms of biological role, catalyzes the peptide bond hydrolysis in dipeptides having basic amino acids lysine, ornithine or arginine at C-terminus. Postulated to function in a metabolite repair mechanism by eliminating alternate dipeptide by-products formed during carnosine synthesis. The protein is Xaa-Arg dipeptidase of Homo sapiens (Human).